A 186-amino-acid chain; its full sequence is Elongation factor P (186 aa).

Belongs to the elongation factor P family.

It localises to the cytoplasm. The protein operates within protein biosynthesis; polypeptide chain elongation. Functionally, involved in peptide bond synthesis. Stimulates efficient translation and peptide-bond synthesis on native or reconstituted 70S ribosomes in vitro. Probably functions indirectly by altering the affinity of the ribosome for aminoacyl-tRNA, thus increasing their reactivity as acceptors for peptidyl transferase. The polypeptide is Elongation factor P (Enterococcus faecalis (strain ATCC 700802 / V583)).